A 211-amino-acid polypeptide reads, in one-letter code: Thiamine-phosphate synthase (211 aa).

4-amino-2-methyl-5-(diphosphooxymethyl)pyrimidine contacts are provided by residues 37–41 and Asn69; that span reads QLRIK. The Mg(2+) site is built by Asp70 and Asp89. A 4-amino-2-methyl-5-(diphosphooxymethyl)pyrimidine-binding site is contributed by Ser108. 134–136 is a binding site for 2-[(2R,5Z)-2-carboxy-4-methylthiazol-5(2H)-ylidene]ethyl phosphate; it reads TQT. Lys137 is a 4-amino-2-methyl-5-(diphosphooxymethyl)pyrimidine binding site. 2-[(2R,5Z)-2-carboxy-4-methylthiazol-5(2H)-ylidene]ethyl phosphate contacts are provided by residues Gly166 and 186–187; that span reads VS.

This sequence belongs to the thiamine-phosphate synthase family. Mg(2+) serves as cofactor.

The enzyme catalyses 2-[(2R,5Z)-2-carboxy-4-methylthiazol-5(2H)-ylidene]ethyl phosphate + 4-amino-2-methyl-5-(diphosphooxymethyl)pyrimidine + 2 H(+) = thiamine phosphate + CO2 + diphosphate. It catalyses the reaction 2-(2-carboxy-4-methylthiazol-5-yl)ethyl phosphate + 4-amino-2-methyl-5-(diphosphooxymethyl)pyrimidine + 2 H(+) = thiamine phosphate + CO2 + diphosphate. The catalysed reaction is 4-methyl-5-(2-phosphooxyethyl)-thiazole + 4-amino-2-methyl-5-(diphosphooxymethyl)pyrimidine + H(+) = thiamine phosphate + diphosphate. The protein operates within cofactor biosynthesis; thiamine diphosphate biosynthesis; thiamine phosphate from 4-amino-2-methyl-5-diphosphomethylpyrimidine and 4-methyl-5-(2-phosphoethyl)-thiazole: step 1/1. Condenses 4-methyl-5-(beta-hydroxyethyl)thiazole monophosphate (THZ-P) and 2-methyl-4-amino-5-hydroxymethyl pyrimidine pyrophosphate (HMP-PP) to form thiamine monophosphate (TMP). In Salmonella typhimurium (strain LT2 / SGSC1412 / ATCC 700720), this protein is Thiamine-phosphate synthase.